The primary structure comprises 860 residues: Leucine--tRNA ligase (860 aa).

The 'HIGH' region signature appears at P42 to H52. The short motif at K619–S623 is the 'KMSKS' region element. K622 contacts ATP.

It belongs to the class-I aminoacyl-tRNA synthetase family.

It localises to the cytoplasm. It catalyses the reaction tRNA(Leu) + L-leucine + ATP = L-leucyl-tRNA(Leu) + AMP + diphosphate. This chain is Leucine--tRNA ligase, found in Histophilus somni (strain 2336) (Haemophilus somnus).